The chain runs to 603 residues: UvrABC system protein C (603 aa).

Positions Asn13–Ile92 constitute a GIY-YIG domain. Residues Asn202–Thr237 form the UVR domain.

It belongs to the UvrC family. In terms of assembly, interacts with UvrB in an incision complex.

The protein resides in the cytoplasm. Its function is as follows. The UvrABC repair system catalyzes the recognition and processing of DNA lesions. UvrC both incises the 5' and 3' sides of the lesion. The N-terminal half is responsible for the 3' incision and the C-terminal half is responsible for the 5' incision. The chain is UvrABC system protein C from Desulfatibacillum aliphaticivorans.